Here is a 495-residue protein sequence, read N- to C-terminus: MDDKLLLDTFIKQVIEQENYTELDRNYLYNRILNLVGEGVEKLTTTKNEIIDLKNELVEYAVQHGKVGETLNEQDCLGAELMNFITPLPSKVNQDFWQTYQQKSPEEAIQNFYDLSKRNDYIKTKAIAKNIYFPVETSYGQLEITINLSKPEKDPKQIALAKKMKASGYPLCQLCMENEGYQGRINYPARANHRIIRFDLDDKQWGFQYSPYAYFNEHCIFLDTIHEPMEITKQTFNNLLGIIEQFPGYFVGSNADLPIVGGSILTHEHYQGGRHTFAMEKAPIETELKFAGYEDIQAGIVKWPMSVIRLRGNSKEDLVDLADKILKTWRGYSDEEVSVLAESNGEKHHTITPIARKRDGQLELDLVLRDNQTSEQYPDGIYHPHPDVQHIKKENIGLIEVMGLAILPPRLKGELQEVEKYLLGQENKMEEYHQVWADDIKQKYSDISQENVGTIIQQELGRVFARVLEDAGVYKHDETGRMAFKRFVEEVGIVD.

This sequence belongs to the galactose-1-phosphate uridylyltransferase type 2 family.

The protein resides in the cytoplasm. It catalyses the reaction alpha-D-galactose 1-phosphate + UDP-alpha-D-glucose = alpha-D-glucose 1-phosphate + UDP-alpha-D-galactose. It participates in carbohydrate metabolism; galactose metabolism. The protein is Galactose-1-phosphate uridylyltransferase of Ligilactobacillus salivarius (strain UCC118) (Lactobacillus salivarius).